The chain runs to 473 residues: Photosystem II CP43 reaction center protein (473 aa).

Residues 1-14 constitute a propeptide that is removed on maturation; the sequence is MKTLYSLRRFYPVE. Thr-15 is modified (N-acetylthreonine). At Thr-15 the chain carries Phosphothreonine. 5 helical membrane passes run 69-93, 134-155, 178-200, 255-275, and 291-312; these read LFEVAHFVPEKPMYEQGLILLPHLA, LLGPETLEESFPFFGYVWKDRN, KALYFGGVYDTWAPGGGDVRKIT, KPFAWARRAFVWSGEAYLSYS, and WFNNTAYPSEFYGPTGPEASQA. Glu-367 lines the [CaMn4O5] cluster pocket. Residues 447–471 form a helical membrane-spanning segment; sequence RARAAAAGFEKGIDRDLEPVLSMTP.

The protein belongs to the PsbB/PsbC family. PsbC subfamily. As to quaternary structure, PSII is composed of 1 copy each of membrane proteins PsbA, PsbB, PsbC, PsbD, PsbE, PsbF, PsbH, PsbI, PsbJ, PsbK, PsbL, PsbM, PsbT, PsbX, PsbY, PsbZ, Psb30/Ycf12, at least 3 peripheral proteins of the oxygen-evolving complex and a large number of cofactors. It forms dimeric complexes. It depends on Binds multiple chlorophylls and provides some of the ligands for the Ca-4Mn-5O cluster of the oxygen-evolving complex. It may also provide a ligand for a Cl- that is required for oxygen evolution. PSII binds additional chlorophylls, carotenoids and specific lipids. as a cofactor.

The protein resides in the plastid. It is found in the chloroplast thylakoid membrane. One of the components of the core complex of photosystem II (PSII). It binds chlorophyll and helps catalyze the primary light-induced photochemical processes of PSII. PSII is a light-driven water:plastoquinone oxidoreductase, using light energy to abstract electrons from H(2)O, generating O(2) and a proton gradient subsequently used for ATP formation. The chain is Photosystem II CP43 reaction center protein from Dioscorea elephantipes (Elephant's foot yam).